The chain runs to 122 residues: Iron-sulfur cluster assembly protein SufA (122 aa).

Residues Cys-50, Cys-114, and Cys-116 each coordinate [2Fe-2S] cluster. [4Fe-4S] cluster contacts are provided by Cys-50, Cys-114, and Cys-116.

This sequence belongs to the HesB/IscA family. As to quaternary structure, homodimer. Interacts with SufB and SufC.

Member of gene cluster sufABCDSE that mediates iron-sulfur cluster assembly under oxidative stress and iron limitation conditions. Binds [2Fe-2S] and [4Fe-4S] clusters by mobilizing sulfur atoms provided by the SufS-SufE cysteine desulfurase system and then transfers the assembled Fe-S clusters to target proteins including ferredoxin and aconitase. Seems to act as a Fe-S cluster carrier rather than a scaffold, this role being performed by SufB and SufC. In Escherichia coli (strain K12), this protein is Iron-sulfur cluster assembly protein SufA (sufA).